The primary structure comprises 463 residues: L-seryl-tRNA(Sec) selenium transferase (463 aa).

Lys295 carries the post-translational modification N6-(pyridoxal phosphate)lysine.

This sequence belongs to the SelA family. Homodecamer; pentamer of dimers. Binds only one seryl-tRNA(Sec) per dimer. Requires pyridoxal 5'-phosphate as cofactor.

The protein resides in the cytoplasm. The catalysed reaction is L-seryl-tRNA(Sec) + selenophosphate + H(+) = L-selenocysteinyl-tRNA(Sec) + phosphate. It functions in the pathway aminoacyl-tRNA biosynthesis; selenocysteinyl-tRNA(Sec) biosynthesis; selenocysteinyl-tRNA(Sec) from L-seryl-tRNA(Sec) (bacterial route): step 1/1. Converts seryl-tRNA(Sec) to selenocysteinyl-tRNA(Sec) required for selenoprotein biosynthesis. The sequence is that of L-seryl-tRNA(Sec) selenium transferase from Shigella sonnei (strain Ss046).